A 293-amino-acid chain; its full sequence is 4-diphosphocytidyl-2-C-methyl-D-erythritol kinase (293 aa).

The active site involves Lys-16. 99 to 109 contacts ATP; it reads PMGAGLGGGSS. The active site involves Asp-141.

The protein belongs to the GHMP kinase family. IspE subfamily.

It catalyses the reaction 4-CDP-2-C-methyl-D-erythritol + ATP = 4-CDP-2-C-methyl-D-erythritol 2-phosphate + ADP + H(+). Its pathway is isoprenoid biosynthesis; isopentenyl diphosphate biosynthesis via DXP pathway; isopentenyl diphosphate from 1-deoxy-D-xylulose 5-phosphate: step 3/6. Its function is as follows. Catalyzes the phosphorylation of the position 2 hydroxy group of 4-diphosphocytidyl-2C-methyl-D-erythritol. The protein is 4-diphosphocytidyl-2-C-methyl-D-erythritol kinase of Burkholderia cenocepacia (strain HI2424).